Consider the following 327-residue polypeptide: Acetyl-coenzyme A carboxylase carboxyl transferase subunit beta (327 aa).

The region spanning 24–293 (LWIKCPDTGQ…LTVTTAVEAP (270 aa)) is the CoA carboxyltransferase N-terminal domain. A compositionally biased stretch (low complexity) spans 293–311 (PAEAAAKAEPEATTTEQPG). The segment at 293 to 327 (PAEAAAKAEPEATTTEQPGAPAPTEPPAQPAAPQA) is disordered. Positions 312–327 (APAPTEPPAQPAAPQA) are enriched in pro residues.

It belongs to the AccD/PCCB family. Acetyl-CoA carboxylase is a heterohexamer composed of biotin carboxyl carrier protein (AccB), biotin carboxylase (AccC) and two subunits each of ACCase subunit alpha (AccA) and ACCase subunit beta (AccD).

It is found in the cytoplasm. The enzyme catalyses N(6)-carboxybiotinyl-L-lysyl-[protein] + acetyl-CoA = N(6)-biotinyl-L-lysyl-[protein] + malonyl-CoA. It participates in lipid metabolism; malonyl-CoA biosynthesis; malonyl-CoA from acetyl-CoA: step 1/1. Functionally, component of the acetyl coenzyme A carboxylase (ACC) complex. Biotin carboxylase (BC) catalyzes the carboxylation of biotin on its carrier protein (BCCP) and then the CO(2) group is transferred by the transcarboxylase to acetyl-CoA to form malonyl-CoA. This chain is Acetyl-coenzyme A carboxylase carboxyl transferase subunit beta, found in Rhodopseudomonas palustris (strain ATCC BAA-98 / CGA009).